Reading from the N-terminus, the 285-residue chain is CCR4-NOT transcription complex subunit 7 (285 aa).

A divalent metal cation contacts are provided by Asp-40, Glu-42, Asp-161, Asp-230, and Glu-278.

Belongs to the CAF1 family. In terms of assembly, component of the CCR4-NOT complex; distinct complexes seem to exist that differ in the participation of probably mutually exclusive catalytic subunits; the complex contains two deadenylase subunits, CNOT6 or CNOT6L, and CNOT7 or CNOT8. In the complex, interacts directly with CNOT1. Interacts with AGO2. Interacts with TOB1; recruited by TOB1 to a ternary complex with CPEB3 which is required for mRNA deadenylation and decay. Interacts with BTG1. Interacts with BTG2. Interacts with NANOS2. Interacts with ZFP36, ZFP36L1 and ZFP36L2; these interactions are inhibited in response to phorbol 12-myristate 13-acetate (PMA) treatment in a p38 MAPK-dependent manner. Interacts with BTG4. Interacts with EIF4E; this interaction is increased by CNOT7 interaction with BTG4. Mn(2+) serves as cofactor. The cofactor is Mg(2+). Requires Co(2+) as cofactor.

Its subcellular location is the nucleus. It is found in the cytoplasm. The protein resides in the P-body. The protein localises to the cytoplasmic ribonucleoprotein granule. The enzyme catalyses Exonucleolytic cleavage of poly(A) to 5'-AMP.. Functionally, has 3'-5' poly(A) exoribonuclease activity for synthetic poly(A) RNA substrate. Its function seems to be partially redundant with that of CNOT8. Catalytic component of the CCR4-NOT complex which is one of the major cellular mRNA deadenylases and is linked to various cellular processes including bulk mRNA degradation, miRNA-mediated repression, translational repression during translational initiation and general transcription regulation. During miRNA-mediated repression the complex also seems to act as translational repressor during translational initiation. Additional complex functions may be a consequence of its influence on mRNA expression. Required for miRNA-mediated mRNA deadenylation. Associates with members of the BTG family such as TOB1 and BTG2 and is required for their anti-proliferative activity. In Bos taurus (Bovine), this protein is CCR4-NOT transcription complex subunit 7 (CNOT7).